The chain runs to 504 residues: CDK5 regulatory subunit-associated protein 3 (504 aa).

3 consecutive short sequence motifs (shuffled ATG8-binding motif) follow at residues 266–269, 290–293, and 308–311; these read IDWG. The tract at residues 268-504 is required for interaction with UFL1 and mediates interaction with CHEK1; sequence WGDFGLEAVS…RPVNLMGTSV (237 aa). The interval 353–368 is RPL10a-binding domain (RBD); the sequence is DELMELEIFLSQRAVE. Lys448 is covalently cross-linked (Glycyl lysine isopeptide (Lys-Gly) (interchain with G-Cter in SUMO2)).

The protein belongs to the CDK5RAP3 family. Substrate adapter component of the UFM1 ribosome E3 ligase (UREL) complex, composed of UFL1, DDRGK1 and CDK5RAP3. Interaction with UFL1 anchors CDK5RAP3 in the cytoplasm, preventing its translocation to the nucleus which allows expression of the CCND1 cyclin and progression of cells through the G1/S transition. Interacts with ATG8 family proteins MAP1LC3A, MAP1LC3B, GABARAP, GABARAPL1 and GABARAPL2. Interacts with CDK5R1; competes with CDK5RAP1 and CDK5RAP2. Interacts with RELA. Interacts with CHEK1; may negatively regulate CHEK1 and thereby stimulate entry into mitosis. Interacts with CDKN2A/ARF and MDM2; forms a ternary complex involved in regulation of p53/TP53. Interacts with MAPK14. Interacts with CCNB1. Interacts with TUBG1; may regulate CDK5RAP3 in mitotic G2/M transition checkpoint. May be phosphorylated by CDK5. Post-translationally, ubiquitinated. Probably triggers proteasomal degradation and is negatively regulated by UFL1. In terms of processing, may be ufmylated. Cleaved by caspases early during apoptosis, the resulting peptides may play a role in rupture of the nuclear envelope. Expressed in vascular endothelium. Up-regulated in failing heart. Highly expressed in the ventricular section in subacute and chronic ischemic heart failure.

Its subcellular location is the endoplasmic reticulum membrane. The protein resides in the cytoplasm. It localises to the nucleus. It is found in the cytoskeleton. The protein localises to the microtubule organizing center. Its subcellular location is the centrosome. In terms of biological role, substrate adapter of E3 ligase complexes mediating ufmylation, the covalent attachment of the ubiquitin-like modifier UFM1 to substrate proteins, and which is involved in various processes, such as ribosome recycling and reticulophagy (also called ER-phagy). As part of the UREL complex, plays a key role in ribosome recycling by promoting mono-ufmylation of RPL26/uL24 subunit of the 60S ribosome. Ufmylation of RPL26/uL24 occurs on free 60S ribosomes following ribosome dissociation: it weakens the junction between post-termination 60S subunits and SEC61 translocons, promoting release and recycling of the large ribosomal subunit from the endoplasmic reticulum membrane. Ufmylation of RPL26/uL24 and subsequent 60S ribosome recycling either take place after normal termination of translation or after ribosome stalling during cotranslational translocation at the endoplasmic reticulum. Within the UREL complex, CDK5RAP3 acts as a substrate adapter that constrains UFL1 ligase activity to mono-ufmylate RPL26/uL24 at 'Lys-134'. The UREL complex is also involved in reticulophagy in response to endoplasmic reticulum stress by promoting ufmylation of proteins such as CYB5R3, thereby promoting lysosomal degradation of ufmylated proteins. Also acts as a regulator of transcription: negatively regulates NF-kappa-B-mediated gene transcription through the control of RELA phosphorylation. Also regulates mitotic G2/M transition checkpoint and mitotic G2 DNA damage checkpoint. Through its interaction with CDKN2A/ARF and MDM2 may induce MDM2-dependent p53/TP53 ubiquitination, stabilization and activation in the nucleus, thereby promoting G1 cell cycle arrest and inhibition of cell proliferation. May also play a role in the rupture of the nuclear envelope during apoptosis. May regulate MAPK14 activity by regulating its dephosphorylation by PPM1D/WIP1. Required for liver development. This is CDK5 regulatory subunit-associated protein 3 from Rattus norvegicus (Rat).